Consider the following 51-residue polypeptide: Ribosome biogenesis protein Nop10 (51 aa).

It belongs to the NOP10 family.

Its function is as follows. Involved in ribosome biogenesis; more specifically in 18S rRNA pseudouridylation and in cleavage of pre-rRNA. The polypeptide is Ribosome biogenesis protein Nop10 (Methanococcus maripaludis (strain C7 / ATCC BAA-1331)).